Consider the following 547-residue polypeptide: MYDITLAAVSIGLFFYVGARAVLKCLFPRQTSFPKHVPVVGVRDEMLSITRASLRQLTNGITTLLDGYSKHGQRNRPFVLYDPSAQPELLLPVQHIRWFSEQPDSKLSSHGVRQERHAVRYLHMGDQVELESTTRFIRYASNDRLNRHLENLQGLLHDEVRRSVDCVFGSQRQAQDDHWKEINLYGAMQDLVFPIMCRVFLGKELGESDEERGRVLTVFRRYLMAMGISTIFIGELPRLLKGVVARVVRIPLAYYRSQTLRMLVPLVRSQLSRTKHDEDDDDERGSDFIKHCANLSTKSTLSGTSSEAGPDLIAEWIMMLAGSLGFAGSSSTIIQATNLILDLVNTPPELLALQQLRHEAERTLQDDSNWTQAASFRQQKLADSAIRESLRLHPILIKGLTKEVVTPNGLELPDDENTTIPMGSWVGVPVLGIHQDERFYPQASEYRPFRFVEQAEAARTQAGGGSYEDAPEAAKPTTTYLGFGYGRHACPGRWFAVLMLKMILSYVLLHYDVESTGPAPKTRVLGDAALPPFRATIRVRKRKLGSE.

Residues 3–23 (DITLAAVSIGLFFYVGARAVL) form a helical membrane-spanning segment. C490 serves as a coordination point for heme.

This sequence belongs to the cytochrome P450 family. Heme serves as cofactor.

It is found in the membrane. It catalyses the reaction isomotiol + reduced [NADPH--hemoprotein reductase] + O2 = 2alpha-hydroxyisomotiol + oxidized [NADPH--hemoprotein reductase] + H2O + H(+). It participates in secondary metabolite biosynthesis; terpenoid biosynthesis. Cytochrome P450 monooxygenase; part of the gene cluster that mediates the biosynthesis of the enfumafungin-type antibiotic, fuscoatroside. Within the pathway, fsoD catalyzes the hydroxylation at position C2 of isomotiol to produce 2-alpha-hydroxy-isomotiol. FsoD may also hydroxylate the intermediates 3-O-(beta-D-glucopyranosyl)-isomotiol and 2-deacetoxy-fuscoatroside at the same position C2. The fuscoatroside biosynthesis is initiated by the cyclization of 2,3(S)-oxidosqualene through FsoA's terpene cyclase (TC) domain, leading to the formation of the fernane skeleton isomotiol, harboring a fernane triterpene skeleton with a C8-C9 double bond. Subsequently, C2-alpha-hydroxylation mediated by fsoD results in the production of 2-alpha-hydroxy-isomotiol, which is further acetylated by fsoF. The glycosyltransferase (GT) domain of FsoA may convert isomotiol, 2-alpha-hydroxy-isomotiol, and the acetylated derivative of 2-alpha-hydroxy-isomotiol into their corresponding glycosides 3-O-(beta-D-glucopyranosyl)-isomotiol, 3-O-(beta-D-glucopyranosyl)-2-alpha-hydroxy-isomotiol, and 3-O-(beta-D-glucopyranosyl)-2-alpha-acetoxy-isomotiol, which then undergo oxidative cleavage under the action of fsoE to form s 2-deacetoxy-fuscoatroside, 2-deacetyl-fuscoatroside, and fuscoatroside, respectively. Although hydroxylation followed by acetylation of 3-O-(beta-D-glucopyranosyl)-isomotiol and 2-deacetoxy-fuscoatroside by fsoD and fsoF could not be ruled out, this process is likely to occur with difficulty due to bulky steric hindrance caused by the presence of a glycan at C3 in these compounds. Interestingly, fsoE can also utilize the aglycones isomotiol and 2-alpha-hydroxy-isomotiol as substrates to generate 19-beta-hydroxy-isomotiol and 2-alpha,19-beta-dihydroxy-isomotiol, respectively. These reactions occur with lower efficiency. Finally, fsoE can further convert 2-alpha,19-beta-dihydroxy-isomotiol into 2-alpha-hydroxy-ismotiol-19-one and 2-alpha-hydroxy-ismotiol-19-one into 2-deacetyl-3-deglucopyranosyl-fuscoatroside. This chain is Cytochrome P450 monooxygenase fsoD, found in Humicola fuscoatra.